A 374-amino-acid chain; its full sequence is Putative C-&gt;U-editing enzyme APOBEC-4 (374 aa).

Residues 60–176 form the CMP/dCMP-type deaminase domain; it reads PQTKHLTFYE…AWNRKALQSL (117 aa). A Zn(2+)-binding site is contributed by H92. The active-site Proton donor is E94. Zn(2+) contacts are provided by C126 and C133. Residues 259–280 form a disordered region; it reads EKHPLGSAAPAQRQPTRGQDPR.

Belongs to the cytidine and deoxycytidylate deaminase family. It depends on Zn(2+) as a cofactor. As to expression, predominantly expressed in testis.

Functionally, putative C to U editing enzyme whose physiological substrate is not yet known. In Mus musculus (Mouse), this protein is Putative C-&gt;U-editing enzyme APOBEC-4 (Apobec4).